Reading from the N-terminus, the 103-residue chain is Large ribosomal subunit protein bL21 (103 aa).

Belongs to the bacterial ribosomal protein bL21 family. As to quaternary structure, part of the 50S ribosomal subunit. Contacts protein L20.

This protein binds to 23S rRNA in the presence of protein L20. This is Large ribosomal subunit protein bL21 from Shewanella piezotolerans (strain WP3 / JCM 13877).